A 124-amino-acid polypeptide reads, in one-letter code: Small ribosomal subunit protein uS12 (124 aa).

At Asp-89 the chain carries 3-methylthioaspartic acid.

It belongs to the universal ribosomal protein uS12 family. As to quaternary structure, part of the 30S ribosomal subunit. Contacts proteins S8 and S17. May interact with IF1 in the 30S initiation complex.

With S4 and S5 plays an important role in translational accuracy. In terms of biological role, interacts with and stabilizes bases of the 16S rRNA that are involved in tRNA selection in the A site and with the mRNA backbone. Located at the interface of the 30S and 50S subunits, it traverses the body of the 30S subunit contacting proteins on the other side and probably holding the rRNA structure together. The combined cluster of proteins S8, S12 and S17 appears to hold together the shoulder and platform of the 30S subunit. This Acinetobacter baylyi (strain ATCC 33305 / BD413 / ADP1) protein is Small ribosomal subunit protein uS12.